The following is a 228-amino-acid chain: Thrombin-like enzyme gyroxin analog (228 aa).

The 222-residue stretch at Val-1–Ala-222 folds into the Peptidase S1 domain. Disulfide bonds link Cys-7-Cys-138, Cys-28-Cys-44, Cys-78-Cys-227, Cys-117-Cys-183, Cys-149-Cys-162, and Cys-173-Cys-198. Residue His-43 is the Charge relay system of the active site. N-linked (GlcNAc...) asparagine glycosylation is found at Asn-45 and Asn-81. Residue Asp-88 is the Charge relay system of the active site. Residue Asn-145 is glycosylated (N-linked (GlcNAc...) asparagine). Ser-177 acts as the Charge relay system in catalysis. A glycan (N-linked (GlcNAc...) asparagine) is linked at Asn-224.

It belongs to the peptidase S1 family. Snake venom subfamily. Monomer. As to expression, expressed by the venom gland.

The protein resides in the secreted. The catalysed reaction is Selective cleavage of Arg-|-Xaa bond in fibrinogen, to form fibrin, and release fibrinopeptide A. The specificity of further degradation of fibrinogen varies with species origin of the enzyme.. With respect to regulation, inhibited competitively by amidines and guanidines, and irreversibly inhibited by diisopropylfluorophosphate. In terms of biological role, thrombin-like snake venom serine protease, that cleaves alpha-chain of fibrinogen (FGA) releases only fibrinopeptide A. Shows coagulant, esterase and amidase activities. Induces the barrel rotation syndrome in mice, which is manifested by gyroxin-like, rapid rolling motions. May also reversibly increase the permeability of the blood brain barrier (BBB) in mice. This is Thrombin-like enzyme gyroxin analog from Lachesis muta muta (Bushmaster).